A 235-amino-acid chain; its full sequence is Aspartate/glutamate leucyltransferase (235 aa).

Belongs to the R-transferase family. Bpt subfamily.

The protein resides in the cytoplasm. It catalyses the reaction N-terminal L-glutamyl-[protein] + L-leucyl-tRNA(Leu) = N-terminal L-leucyl-L-glutamyl-[protein] + tRNA(Leu) + H(+). It carries out the reaction N-terminal L-aspartyl-[protein] + L-leucyl-tRNA(Leu) = N-terminal L-leucyl-L-aspartyl-[protein] + tRNA(Leu) + H(+). Functions in the N-end rule pathway of protein degradation where it conjugates Leu from its aminoacyl-tRNA to the N-termini of proteins containing an N-terminal aspartate or glutamate. This chain is Aspartate/glutamate leucyltransferase, found in Pseudomonas paraeruginosa (strain DSM 24068 / PA7) (Pseudomonas aeruginosa (strain PA7)).